We begin with the raw amino-acid sequence, 211 residues long: Guanylate kinase (211 aa).

The Guanylate kinase-like domain occupies 5 to 184; the sequence is GLLIVFSGPS…AAERVKRIIE (180 aa). 12–19 provides a ligand contact to ATP; sequence GPSGVGKG.

It belongs to the guanylate kinase family.

It localises to the cytoplasm. The catalysed reaction is GMP + ATP = GDP + ADP. Functionally, essential for recycling GMP and indirectly, cGMP. This is Guanylate kinase from Streptococcus pyogenes serotype M1.